Reading from the N-terminus, the 44-residue chain is pyr operon leader peptide (44 aa).

In Shigella flexneri, this protein is pyr operon leader peptide (pyrL).